Reading from the N-terminus, the 125-residue chain is Fluoride-specific ion channel FluC (125 aa).

Helical transmembrane passes span 1-21, 32-52, 68-88, and 101-121; these read MIQALLVAVGGAIGSLLRYYV, AFPWGTLAVNVVGCFVIGVFA, LLITGFLGGFTTFSAFSLDAI, and IYTVASVGLSMAAVMAGLAVM. Gly-75 and Thr-78 together coordinate Na(+).

Belongs to the fluoride channel Fluc/FEX (TC 1.A.43) family.

The protein localises to the cell inner membrane. The catalysed reaction is fluoride(in) = fluoride(out). Na(+) is not transported, but it plays an essential structural role and its presence is essential for fluoride channel function. Fluoride-specific ion channel. Important for reducing fluoride concentration in the cell, thus reducing its toxicity. This Rhizobium leguminosarum bv. trifolii (strain WSM2304) protein is Fluoride-specific ion channel FluC.